The primary structure comprises 162 residues: Protein-export protein SecB (162 aa).

The protein belongs to the SecB family. Homotetramer, a dimer of dimers. One homotetramer interacts with 1 SecA dimer.

It localises to the cytoplasm. Its function is as follows. One of the proteins required for the normal export of preproteins out of the cell cytoplasm. It is a molecular chaperone that binds to a subset of precursor proteins, maintaining them in a translocation-competent state. It also specifically binds to its receptor SecA. The polypeptide is Protein-export protein SecB (Legionella pneumophila subsp. pneumophila (strain Philadelphia 1 / ATCC 33152 / DSM 7513)).